The chain runs to 183 residues: Translation initiation factor IF-3 (183 aa).

A compositionally biased stretch (polar residues) spans Met-1–Lys-13. Residues Met-1–Asp-21 are disordered.

The protein belongs to the IF-3 family. Monomer.

The protein localises to the cytoplasm. In terms of biological role, IF-3 binds to the 30S ribosomal subunit and shifts the equilibrium between 70S ribosomes and their 50S and 30S subunits in favor of the free subunits, thus enhancing the availability of 30S subunits on which protein synthesis initiation begins. The chain is Translation initiation factor IF-3 from Acinetobacter baumannii (strain AYE).